The sequence spans 188 residues: Elongation factor P (188 aa).

This sequence belongs to the elongation factor P family.

Its subcellular location is the cytoplasm. Its pathway is protein biosynthesis; polypeptide chain elongation. Functionally, involved in peptide bond synthesis. Stimulates efficient translation and peptide-bond synthesis on native or reconstituted 70S ribosomes in vitro. Probably functions indirectly by altering the affinity of the ribosome for aminoacyl-tRNA, thus increasing their reactivity as acceptors for peptidyl transferase. This chain is Elongation factor P, found in Gemmatimonas aurantiaca (strain DSM 14586 / JCM 11422 / NBRC 100505 / T-27).